Reading from the N-terminus, the 421-residue chain is Testin (421 aa).

Residues 92-199 (MILTNPVAAK…GDVKLPCEMD (108 aa)) form the PET domain. The tract at residues 133–164 (EKQPVAGSEGAQYRKKQLAKQLPAHDQDPSKC) is disordered. Residues 155–164 (PAHDQDPSKC) are compositionally biased toward basic and acidic residues. LIM zinc-binding domains are found at residues 234-297 (YSCY…CDSE), 299-359 (PRCA…NHAV), and 362-421 (QGCH…KMMS).

This sequence belongs to the prickle / espinas / testin family. As to quaternary structure, interacts via LIM domain 1 with ZYX. Interacts (via LIM domain 3) with ENAH and VASP. Interacts with ALKBH4, talin, actin, alpha-actinin, GRIP1 and PXN. Interacts (via LIM domain 2) with ACTL7A (via N-terminus). Heterodimer with ACTL7A; the heterodimer interacts with ENAH to form a heterotrimer.

Its subcellular location is the cytoplasm. The protein localises to the cell junction. It localises to the focal adhesion. Functionally, scaffold protein that may play a role in cell adhesion, cell spreading and in the reorganization of the actin cytoskeleton. Plays a role in the regulation of cell proliferation. May act as a tumor suppressor. The polypeptide is Testin (TES) (Saimiri boliviensis boliviensis (Bolivian squirrel monkey)).